The primary structure comprises 393 residues: Epoxyqueuosine reductase (393 aa).

Residue aspartate 154 is the Proton donor of the active site. The 4Fe-4S ferredoxin-type domain maps to 196-228 (LPLPVDIPVQEGCHSCVACITSCPTGAIVEPYT). Residues cysteine 208, cysteine 211, cysteine 214, cysteine 218, cysteine 234, cysteine 261, cysteine 264, and cysteine 268 each contribute to the [4Fe-4S] cluster site.

The protein belongs to the QueG family. As to quaternary structure, monomer. It depends on cob(II)alamin as a cofactor. The cofactor is [4Fe-4S] cluster.

The protein localises to the cytoplasm. It catalyses the reaction epoxyqueuosine(34) in tRNA + AH2 = queuosine(34) in tRNA + A + H2O. It participates in tRNA modification; tRNA-queuosine biosynthesis. Catalyzes the conversion of epoxyqueuosine (oQ) to queuosine (Q), which is a hypermodified base found in the wobble positions of tRNA(Asp), tRNA(Asn), tRNA(His) and tRNA(Tyr). This is Epoxyqueuosine reductase from Shewanella oneidensis (strain ATCC 700550 / JCM 31522 / CIP 106686 / LMG 19005 / NCIMB 14063 / MR-1).